Consider the following 393-residue polypeptide: Decapping nuclease dom-3 (393 aa).

Residues 1-37 (MSHYGGNPRGNSSHQFGRKDFQQSDSKHIPKITGQPL) form a disordered region. Basic and acidic residues predominate over residues 17 to 28 (GRKDFQQSDSKH). Substrate is bound by residues R74, E113, and 144-146 (WRG). Mg(2+) contacts are provided by E205, E257, D259, E269, and L270. E257 serves as a coordination point for substrate. 2 residues coordinate substrate: K271 and Q293.

Belongs to the DXO/Dom3Z family. Requires Mg(2+) as cofactor.

It carries out the reaction a 5'-end NAD(+)-phospho-ribonucleoside in mRNA + H2O = a 5'-end phospho-ribonucleoside in mRNA + NAD(+) + H(+). The catalysed reaction is a 5'-end (N(7)-methyl 5'-triphosphoguanosine)-ribonucleoside-ribonucleotide in mRNA + H2O = a (N(7)-methyl 5'-triphosphoguanosine)-nucleoside + a 5'-end phospho-ribonucleoside in mRNA + H(+). The enzyme catalyses a 5'-end triphospho-ribonucleoside in mRNA + H2O = a 5'-end phospho-ribonucleoside in mRNA + diphosphate + H(+). Decapping enzyme for NAD-capped RNAs: specifically hydrolyzes the nicotinamide adenine dinucleotide (NAD) cap from a subset of RNAs by removing the entire NAD moiety from the 5'-end of an NAD-capped RNA. The NAD-cap is present at the 5'-end of some RNAs and snoRNAs. In contrast to the canonical 5'-end N7 methylguanosine (m7G) cap, the NAD cap promotes mRNA decay. Also acts as a non-canonical decapping enzyme that removes the entire cap structure of m7G capped or incompletely capped RNAs and mediates their subsequent degradation. Specifically degrades pre-mRNAs with a defective 5'-end m7G cap and is part of a pre-mRNA capping quality control. Also possesses RNA 5'-pyrophosphohydrolase activity by hydrolyzing the 5'-end triphosphate to release pyrophosphates. The chain is Decapping nuclease dom-3 from Caenorhabditis elegans.